Reading from the N-terminus, the 1068-residue chain is Ubiquitin-protein ligase E3B (1068 aa).

N-acetylmethionine is present on methionine 1. The IQ domain occupies 29–58; it reads RERAAVVIQAHVRSFLCRSRLQRDIRREID. A Phosphoserine modification is found at serine 419. The HECT domain maps to 702 to 1068; sequence SQHAMKGVIR…ISMNTGFELS (367 aa). Cysteine 1036 acts as the Glycyl thioester intermediate in catalysis.

As to expression, widely expressed.

It localises to the postsynaptic density. The catalysed reaction is S-ubiquitinyl-[E2 ubiquitin-conjugating enzyme]-L-cysteine + [acceptor protein]-L-lysine = [E2 ubiquitin-conjugating enzyme]-L-cysteine + N(6)-ubiquitinyl-[acceptor protein]-L-lysine.. The protein operates within protein modification; protein ubiquitination. Its function is as follows. E3 ubiquitin-protein ligase which accepts ubiquitin from an E2 ubiquitin-conjugating enzyme in the form of a thioester and then directly transfers the ubiquitin to targeted substrates. Ubiquitinates BCKDK and targets it for degradation, thereby regulating various metabolic processes. Involved in the positive regulation of neurite branching in hippocampal neurons and the control of neuronal spine number and morphology, through the ubiquitination of PPP3CC. The chain is Ubiquitin-protein ligase E3B (UBE3B) from Homo sapiens (Human).